Here is a 410-residue protein sequence, read N- to C-terminus: MPLHVEILSTGDELLTGQVVDTNSTWLMDRLWDLGVMVRRKTLVGDDRADLDAALRETSGRSDLVVVSGGMGPTEDDLTSERVAAVLGVPLELHEPSLRALEERFRKFGRAMTPNNEKQARFPRGAEVIPNRFGSAPGFAVRIGRAEVVCFPGVPVEYRGLADEWLLPRVAARLGEVPASRLLKLFAVPESHADHAMRPVMDDPANEGVRFGFRAHWPEVHVKWTVPGPGADARAARIAAAVRGIFGDAVFGEAKEELPALVVARLAARGERVALAESCTGGLLAELVTGVPGASAVIDLGVVAYANAMKEAVLGVPAPLLAAHGAVSEPVARALAEGARRAGRATWGLGITGIAGPTGGTPEKPVGTVHVALAGPGGTTAVERLYRGDRERIRKTAAFEALNLLRLALR.

It belongs to the CinA family.

The sequence is that of CinA-like protein from Anaeromyxobacter sp. (strain Fw109-5).